The sequence spans 64 residues: Fatty acid synthase (64 aa).

A Carrier domain is found at Ala1 to Leu64. Ser38 is modified (O-(pantetheine 4'-phosphoryl)serine; alternate). At Ser38 the chain carries Phosphoserine; alternate.

Homodimer which is arranged in a head to tail fashion. Interacts with CEACAM1; this interaction is insulin and phosphorylation-dependent; reduces fatty-acid synthase activity.

The protein localises to the cytoplasm. Its subcellular location is the melanosome. It catalyses the reaction acetyl-CoA + n malonyl-CoA + 2n NADPH + 2n H(+) = a long-chain fatty acid + (n+1) CoA + n CO2 + 2n NADP(+).. In terms of biological role, fatty acid synthetase catalyzes the formation of long-chain fatty acids from acetyl-CoA, malonyl-CoA and NADPH. This multifunctional protein has 7 catalytic activities as an acyl carrier protein. This Oryctolagus cuniculus (Rabbit) protein is Fatty acid synthase (FASN).